The primary structure comprises 559 residues: MGICSSTCCGGRARDGLYEPVLADSEREAVADLLQYLENRGETDFFSGEPLRALSTLVFSENIDLQRSASLTFAEITERDVREVDRDTLEPILFLLQSPDIEVQRAASAALGNLAVDTENKVLIVQLGGLTPLIRQMMSPNVEVQCNAVGCITNLATHEENKAKIARSGALGPLTRLAKSRDMRVQRNATGALLNMTHSDENRQQLVNAGAIPVLVQLLSSPDVDVQYYCTTALSNIAVDASNRRKLAQSEPKLVQSLVNLMDSTSPKVQCQAALALRNLASDEKYQLDIVRANGLHPLLRLLQSSYLPLILSAVACIRNISIHPMNESPIIETNFLKPLVDLLGSTDNEEIQCHAISTLRNLAASSDRNKALVLDAGAVQKCKQLVLDVPITVQSEMTAAIAVLALSDDLKSHLLNLGVCGVLIPLTHSPSIEVQGNSAAALGNLSSKVGDYSIFVQNWTEPQGGIHGYLCRFLQSGDATFQHIAVWTLLQLFESEDKTLIGLIGKAEDIIEHIRSIANRQIEPDNEFEDEDEGEVVNLAQRCLELLGQSMSKAHIEG.

The N-myristoyl glycine moiety is linked to residue glycine 2. Cysteine 4 carries the S-palmitoyl cysteine lipid modification. ARM repeat units follow at residues 77-116 (TERD…NLAV), 118-157 (TENK…NLAT), 159-198 (EENK…NMTH), 200-239 (DENR…NIAV), 243-282 (NRRK…NLAS), 284-323 (EKYQ…NISI), 325-365 (PMNE…NLAA), and 409-448 (DDLK…NLSS).

It belongs to the beta-catenin family.

The protein localises to the vacuole membrane. Functions in both vacuole inheritance and protein targeting from the cytoplasm to vacuole. This Gibberella zeae (strain ATCC MYA-4620 / CBS 123657 / FGSC 9075 / NRRL 31084 / PH-1) (Wheat head blight fungus) protein is Vacuolar protein 8 (VAC8).